Reading from the N-terminus, the 329-residue chain is MAP kinase-activated protein kinase 2 (329 aa).

ATP is bound by residues leucine 1–valine 7 and lysine 22. The region spanning leucine 1–isoleucine 254 is the Protein kinase domain. Glutamate 68 to leucine 70 serves as a coordination point for staurosporine. The active-site Proton acceptor is aspartate 115. The residue at position 151 (threonine 151) is a Phosphothreonine; by MAPK14. Serine 201 carries the post-translational modification Phosphoserine; by MAPK14. The residue at position 257 (serine 257) is a Phosphoserine; by autocatalysis. An autoinhibitory helix region spans residues serine 257–arginine 293. Threonine 263 bears the Phosphothreonine; by MAPK14 mark. Lysine 282 participates in a covalent cross-link: Glycyl lysine isopeptide (Lys-Gly) (interchain with G-Cter in SUMO). The Nuclear export signal (NES) motif lies at methionine 285–valine 294. The interval aspartate 295–alanine 319 is p38 MAPK-binding site. 2 short sequence motifs (bipartite nuclear localization signal) span residues lysine 300–lysine 303 and lysine 314–lysine 318.

This sequence belongs to the protein kinase superfamily. CAMK Ser/Thr protein kinase family. Heterodimer with p38-alpha/MAPK14; this heterodimer forms a stable complex: molecules are positioned 'face to face' so that the ATP-binding sites of both kinases are at the heterodimer interface. Interacts with PHC2. Interacts with HSF1. Sumoylation inhibits the protein kinase activity. In terms of processing, phosphorylated and activated by MAP kinase p38-alpha/MAPK14 at Thr-151, Ser-201 and Thr-263.

The protein resides in the cytoplasm. It localises to the nucleus. It catalyses the reaction L-seryl-[protein] + ATP = O-phospho-L-seryl-[protein] + ADP + H(+). It carries out the reaction L-threonyl-[protein] + ATP = O-phospho-L-threonyl-[protein] + ADP + H(+). Activated following phosphorylation by p38-alpha/MAPK14 following various stresses. Inhibited following sumoylation. Specifically inhibited by pyrrolopyridine inhibitors. Stress-activated serine/threonine-protein kinase involved in cytokine production, endocytosis, reorganization of the cytoskeleton, cell migration, cell cycle control, chromatin remodeling, DNA damage response and transcriptional regulation. Following stress, it is phosphorylated and activated by MAP kinase p38-alpha/MAPK14, leading to phosphorylation of substrates. Phosphorylates serine in the peptide sequence, Hyd-X-R-X(2)-S, where Hyd is a large hydrophobic residue. Phosphorylates ALOX5, CDC25B, CDC25C, CEP131, ELAVL1, HNRNPA0, HSP27/HSPB1, KRT18, KRT20, LIMK1, LSP1, PABPC1, PARN, PDE4A, RCSD1, RPS6KA3, TAB3 and TTP/ZFP36. Phosphorylates HSF1; leading to the interaction with HSP90 proteins and inhibiting HSF1 homotrimerization, DNA-binding and transactivation activities. Mediates phosphorylation of HSP27/HSPB1 in response to stress, leading to the dissociation of HSP27/HSPB1 from large small heat-shock protein (sHsps) oligomers and impairment of their chaperone activities and ability to protect against oxidative stress effectively. Involved in inflammatory response by regulating tumor necrosis factor (TNF) and IL6 production post-transcriptionally: acts by phosphorylating AU-rich elements (AREs)-binding proteins ELAVL1, HNRNPA0, PABPC1 and TTP/ZFP36, leading to regulation of the stability and translation of TNF and IL6 mRNAs. Phosphorylation of TTP/ZFP36, a major post-transcriptional regulator of TNF, promotes its binding to 14-3-3 proteins and reduces its ARE mRNA affinity, leading to inhibition of dependent degradation of ARE-containing transcripts. Phosphorylates CEP131 in response to cellular stress following ultraviolet irradiation which promotes binding of CEP131 to 14-3-3 proteins and inhibits formation of novel centriolar satellites. Also involved in late G2/M checkpoint following DNA damage through a process of post-transcriptional mRNA stabilization: following DNA damage, relocalizes from nucleus to cytoplasm and phosphorylates HNRNPA0 and PARN, leading to stabilization of GADD45A mRNA. Involved in toll-like receptor signaling pathway (TLR) in dendritic cells: required for acute TLR-induced macropinocytosis by phosphorylating and activating RPS6KA3. The chain is MAP kinase-activated protein kinase 2 (MAPKAPK2) from Cricetulus longicaudatus (Long-tailed dwarf hamster).